The following is a 328-amino-acid chain: L-lactate dehydrogenase (328 aa).

Residues valine 18, glutamate 39, lysine 46, tyrosine 71, and 85 to 86 (GA) each bind NAD(+). Substrate is bound by residues glutamine 88 and arginine 94. Residues serine 107, 124-126 (AAN), and serine 149 contribute to the NAD(+) site. Residue 126-129 (NPVD) coordinates substrate. 154 to 157 (DSAR) contacts substrate. Arginine 159 and histidine 174 together coordinate beta-D-fructose 1,6-bisphosphate. Catalysis depends on histidine 181, which acts as the Proton acceptor. Residue tyrosine 226 is modified to Phosphotyrosine. Threonine 235 lines the substrate pocket.

It belongs to the LDH/MDH superfamily. LDH family. Homotetramer.

The protein resides in the cytoplasm. The catalysed reaction is (S)-lactate + NAD(+) = pyruvate + NADH + H(+). Its pathway is fermentation; pyruvate fermentation to lactate; (S)-lactate from pyruvate: step 1/1. Its activity is regulated as follows. Allosterically activated by fructose 1,6-bisphosphate (FBP). Functionally, catalyzes the conversion of lactate to pyruvate. The polypeptide is L-lactate dehydrogenase (Streptococcus gordonii (strain Challis / ATCC 35105 / BCRC 15272 / CH1 / DL1 / V288)).